Here is an 847-residue protein sequence, read N- to C-terminus: Guanine nucleotide exchange factor VAV3 (847 aa).

Positions 1–119 (MEPWKQCAQW…ETLSRLSRTP (119 aa)) constitute a Calponin-homology (CH) domain. Tyr141 carries the phosphotyrosine modification. A DH domain is found at 192-371 (IRSCCLAEIR…KDLAQYVNEV (180 aa)). The PH domain occupies 400 to 502 (RPQGDGEIRI…WLEQFEMALS (103 aa)). A Phorbol-ester/DAG-type zinc finger spans residues 513 to 562 (FHDFKMHTFTRVTSCRVCQMLLRGTFYQGYLCFKCGAKAHKECLGRVDNC). The sufficient for interaction with ROS1 stretch occupies residues 560–847 (DNCGRVNSVE…FPSTYVEEDE (288 aa)). Positions 592 to 660 (PGLPKMQVIR…PSDAVKPSPC (69 aa)) constitute an SH3 1 domain. The region spanning 672 to 766 (WYAGPMERLQ…TLDTTLQFPY (95 aa)) is the SH2 domain. Residues 788-847 (KVLGIAIARYDFCARDMRELSLLKGDMVKIYTKMSANGWWRGEVNGRVGWFPSTYVEEDE) form the SH3 2 domain.

Interacts with the PH domain of APS. Interacts with ROS1; constitutive interaction that mediates VAV3 phosphorylation. Interacts (via SH2 domains) with the phosphorylated form of EPHA2. In terms of processing, phosphorylated. Phosphorylation can be mediated by ROS1. In osteoclasts, undergoes tyrosine phosphorylation in response to CSF1. Abundantly expressed in osteoclasts and mature osteoblasts. Also expressed in bone marrow macrophages (at protein level):.

Its function is as follows. Exchange factor for GTP-binding proteins RhoA, RhoG and, to a lesser extent, Rac1. Binds physically to the nucleotide-free states of those GTPases. Plays an important role in angiogenesis. Its recruitment by phosphorylated EPHA2 is critical for EFNA1-induced RAC1 GTPase activation and vascular endothelial cell migration and assembly. May be important for integrin-mediated signaling, at least in some cell types. In osteoclasts, along with SYK tyrosine kinase, required for signaling through integrin alpha-v/beta-1 (ITAGV-ITGB1), a crucial event for osteoclast proper cytoskeleton organization and function. This signaling pathway involves RAC1, but not RHO, activation. Necessary for proper wound healing. In the course of wound healing, required for the phagocytotic cup formation preceding macrophage phagocytosis of apoptotic neutrophils. Responsible for integrin beta-2-mediated macrophage adhesion and, to a lesser extent, contributes to beta-3-mediated adhesion. Does not affect integrin beta-1-mediated adhesion. This Mus musculus (Mouse) protein is Guanine nucleotide exchange factor VAV3 (Vav3).